We begin with the raw amino-acid sequence, 152 residues long: AGGEAGVTLGQPSLVEQDSHSGFKNELERDGGLLLIAGNESKLKHILILGNKIDLVKESQAKEQYGQILAFVQETVAXGATVGQVLGAVGALPEIFTELXIVNIGSLSTGGQVSAVKADLGKIVLTNPVXTEVGEEKSVEKHWRLIGWGQIR.

An N-acetylalanine modification is found at Ala1. 51–54 (NKID) lines the GTP pocket.

It belongs to the TRAFAC class translation factor GTPase superfamily. Classic translation factor GTPase family. EIF2G subfamily. Eukaryotic translation initiation factor 2 eIF2 is a heterotrimeric complex composed of an alpha (EIF2S1), a beta (EIF2S2) and a gamma (EIF2S3) chain. eIF2 is member of the 43S pre-initiation complex (43S PIC). Interacts (via C-terminus) with CDC123; the interaction is direct.

The protein resides in the cytoplasm. Its subcellular location is the cytosol. Member of the eIF2 complex that functions in the early steps of protein synthesis by forming a ternary complex with GTP and initiator tRNA. This complex binds to a 40S ribosomal subunit, followed by mRNA binding to form the 43S pre-initiation complex (43S PIC). Junction of the 60S ribosomal subunit to form the 80S initiation complex is preceded by hydrolysis of the GTP bound to eIF2 and release of an eIF2-GDP binary complex. In order for eIF2 to recycle and catalyze another round of initiation, the GDP bound to eIF2 must exchange with GTP by way of a reaction catalyzed by eIF-2B. The protein is Eukaryotic translation initiation factor 2 subunit 3 (EIF2S3) of Oryctolagus cuniculus (Rabbit).